We begin with the raw amino-acid sequence, 305 residues long: UDP-3-O-acyl-N-acetylglucosamine deacetylase (305 aa).

Zn(2+) contacts are provided by histidine 78, histidine 237, and aspartate 241. Catalysis depends on histidine 264, which acts as the Proton donor.

It belongs to the LpxC family. Zn(2+) is required as a cofactor.

The catalysed reaction is a UDP-3-O-[(3R)-3-hydroxyacyl]-N-acetyl-alpha-D-glucosamine + H2O = a UDP-3-O-[(3R)-3-hydroxyacyl]-alpha-D-glucosamine + acetate. The protein operates within glycolipid biosynthesis; lipid IV(A) biosynthesis; lipid IV(A) from (3R)-3-hydroxytetradecanoyl-[acyl-carrier-protein] and UDP-N-acetyl-alpha-D-glucosamine: step 2/6. Its function is as follows. Catalyzes the hydrolysis of UDP-3-O-myristoyl-N-acetylglucosamine to form UDP-3-O-myristoylglucosamine and acetate, the committed step in lipid A biosynthesis. In Paraburkholderia xenovorans (strain LB400), this protein is UDP-3-O-acyl-N-acetylglucosamine deacetylase.